We begin with the raw amino-acid sequence, 472 residues long: Diaminopimelate decarboxylase (472 aa).

The disordered stretch occupies residues 1-23 (MNVHTAGPRHAEKTRHTATPQRV). At lysine 97 the chain carries N6-(pyridoxal phosphate)lysine. Pyridoxal 5'-phosphate is bound by residues glycine 283 and 325–328 (EPGR). Arginine 328, arginine 369, and tyrosine 373 together coordinate substrate. The Proton donor role is filled by cysteine 400. Substrate contacts are provided by glutamate 401 and tyrosine 430. Tyrosine 430 lines the pyridoxal 5'-phosphate pocket.

This sequence belongs to the Orn/Lys/Arg decarboxylase class-II family. LysA subfamily. Homodimer. Requires pyridoxal 5'-phosphate as cofactor.

The enzyme catalyses meso-2,6-diaminopimelate + H(+) = L-lysine + CO2. The protein operates within amino-acid biosynthesis; L-lysine biosynthesis via DAP pathway; L-lysine from DL-2,6-diaminopimelate: step 1/1. In terms of biological role, specifically catalyzes the decarboxylation of meso-diaminopimelate (meso-DAP) to L-lysine. This chain is Diaminopimelate decarboxylase, found in Mycobacterium leprae (strain TN).